Reading from the N-terminus, the 576-residue chain is Putative diflavin flavoprotein A 1 (576 aa).

Positions 48–240 (RNGTTYNSFL…LAIKTVATGH (193 aa)) are zinc metallo-hydrolase. Histidine 97, glutamate 99, aspartate 101, histidine 164, aspartate 183, and histidine 240 together coordinate Fe cation. Positions 269 to 431 (VALFYAEDYG…DLEKALGRIS (163 aa)) constitute a Flavodoxin-like domain. Residues 432-576 (TGLYIITTKK…VHHRKVGNHY (145 aa)) are flavodoxin-reductase-like.

It in the N-terminal section; belongs to the zinc metallo-hydrolase group 3 family. In the C-terminal section; belongs to the flavodoxin reductase family. Requires Fe cation as cofactor.

Mediates electron transfer from NADH to oxygen, reducing it to water. This modular protein has 3 redox cofactors, in other organisms the same activity requires 2 or 3 proteins. This chain is Putative diflavin flavoprotein A 1 (dfa1), found in Nostoc sp. (strain PCC 7120 / SAG 25.82 / UTEX 2576).